A 294-amino-acid polypeptide reads, in one-letter code: ATP synthase gamma chain (294 aa).

The protein belongs to the ATPase gamma chain family. In terms of assembly, F-type ATPases have 2 components, CF(1) - the catalytic core - and CF(0) - the membrane proton channel. CF(1) has five subunits: alpha(3), beta(3), gamma(1), delta(1), epsilon(1). CF(0) has three main subunits: a, b and c.

It is found in the cell inner membrane. In terms of biological role, produces ATP from ADP in the presence of a proton gradient across the membrane. The gamma chain is believed to be important in regulating ATPase activity and the flow of protons through the CF(0) complex. The sequence is that of ATP synthase gamma chain from Campylobacter jejuni subsp. doylei (strain ATCC BAA-1458 / RM4099 / 269.97).